The sequence spans 368 residues: Branched-chain-amino-acid aminotransferase (368 aa).

R101 is a binding site for pyridoxal 5'-phosphate. K204 bears the N6-(pyridoxal phosphate)lysine mark. Pyridoxal 5'-phosphate is bound by residues Y209 and 271–272 (IT). Residue K299 forms an Isoglutamyl lysine isopeptide (Lys-Gln) (interchain with Q-Cter in protein Pup) linkage. T314 serves as a coordination point for pyridoxal 5'-phosphate.

Belongs to the class-IV pyridoxal-phosphate-dependent aminotransferase family. As to quaternary structure, homodimer. Pyridoxal 5'-phosphate is required as a cofactor.

It catalyses the reaction L-isoleucine + 2-oxoglutarate = (S)-3-methyl-2-oxopentanoate + L-glutamate. It carries out the reaction L-valine + 2-oxoglutarate = 3-methyl-2-oxobutanoate + L-glutamate. The enzyme catalyses L-leucine + 2-oxoglutarate = 4-methyl-2-oxopentanoate + L-glutamate. It functions in the pathway amino-acid biosynthesis; L-isoleucine biosynthesis; L-isoleucine from 2-oxobutanoate: step 4/4. It participates in amino-acid biosynthesis; L-leucine biosynthesis; L-leucine from 3-methyl-2-oxobutanoate: step 4/4. The protein operates within amino-acid biosynthesis; L-valine biosynthesis; L-valine from pyruvate: step 4/4. With respect to regulation, inhibited by ammonium sulfate at millimolar concentrations and by O-benzylhydroxylamine (Obe). Catalyzes the reversible transfers of an amino group from glutamate to the alpha-ketoacid of the respective amino acid in the final step in the biosynthesis of branchedchain amino acids. The amino acids can be ranked in the following order with respect to their efficiency as amino donor: Leu &gt; Ile &gt; Val. This Mycolicibacterium smegmatis (strain ATCC 700084 / mc(2)155) (Mycobacterium smegmatis) protein is Branched-chain-amino-acid aminotransferase (ilvE).